Reading from the N-terminus, the 197-residue chain is Ribosomal RNA large subunit methyltransferase E (197 aa).

G50, W52, D70, D88, and D111 together coordinate S-adenosyl-L-methionine. The active-site Proton acceptor is K151.

The protein belongs to the class I-like SAM-binding methyltransferase superfamily. RNA methyltransferase RlmE family.

It is found in the cytoplasm. It carries out the reaction uridine(2552) in 23S rRNA + S-adenosyl-L-methionine = 2'-O-methyluridine(2552) in 23S rRNA + S-adenosyl-L-homocysteine + H(+). In terms of biological role, specifically methylates the uridine in position 2552 of 23S rRNA at the 2'-O position of the ribose in the fully assembled 50S ribosomal subunit. The chain is Ribosomal RNA large subunit methyltransferase E from Syntrophobacter fumaroxidans (strain DSM 10017 / MPOB).